The sequence spans 425 residues: MIDIKLIRQDPDFVKDALKKRGEDTDIIDEILKIDSEWRSVTTELNELRAKRNDISKNVAKLKKEGKSSEANALIEEGKRIGEEIKSLEEKEKELQSKLRDLLLRVPNIPHESVPVGSDESQNVEVRRWGEPRKFDFAPLAHWDLGPAWGLMDFDRASKLSGSRFTVMYGKLARLERALINFMLDVHTREHGYTEVWVPHLVKRETITITGQLPKFEEELYLTEKDDLFLIPTAEVPLVALHSGEILEEKDLPKKYVAYTPCYRREAGSYGKDVRGMIRQHQFDKVELVWITTPERSFDDLEQLVRDAETILQRLGLPYRVVSLCTGDLGFASAKTYDIEVWLPSYNAYKEISSCSNVTDFQARRGNMRYRRRSDGKLTLVHTLNGSGIAVGRTLVAILENYQQPDGSVKVPEALVPYTGFEVIP.

233–235 provides a ligand contact to L-serine; the sequence is TAE. ATP is bound at residue 264–266; sequence RRE. Glu287 contributes to the L-serine binding site. Residue 351-354 coordinates ATP; it reads EISS. Ser387 contacts L-serine.

It belongs to the class-II aminoacyl-tRNA synthetase family. Type-1 seryl-tRNA synthetase subfamily. As to quaternary structure, homodimer. The tRNA molecule binds across the dimer.

The protein resides in the cytoplasm. The catalysed reaction is tRNA(Ser) + L-serine + ATP = L-seryl-tRNA(Ser) + AMP + diphosphate + H(+). It catalyses the reaction tRNA(Sec) + L-serine + ATP = L-seryl-tRNA(Sec) + AMP + diphosphate + H(+). Its pathway is aminoacyl-tRNA biosynthesis; selenocysteinyl-tRNA(Sec) biosynthesis; L-seryl-tRNA(Sec) from L-serine and tRNA(Sec): step 1/1. Functionally, catalyzes the attachment of serine to tRNA(Ser). Is also able to aminoacylate tRNA(Sec) with serine, to form the misacylated tRNA L-seryl-tRNA(Sec), which will be further converted into selenocysteinyl-tRNA(Sec). This Thermotoga neapolitana (strain ATCC 49049 / DSM 4359 / NBRC 107923 / NS-E) protein is Serine--tRNA ligase.